Consider the following 500-residue polypeptide: Probable cytosol aminopeptidase (500 aa).

Mn(2+) contacts are provided by Lys-264 and Asp-269. Residue Lys-276 is part of the active site. Mn(2+) is bound by residues Asp-287, Asp-346, and Glu-348. The active site involves Arg-350.

The protein belongs to the peptidase M17 family. The cofactor is Mn(2+).

The protein resides in the cytoplasm. The enzyme catalyses Release of an N-terminal amino acid, Xaa-|-Yaa-, in which Xaa is preferably Leu, but may be other amino acids including Pro although not Arg or Lys, and Yaa may be Pro. Amino acid amides and methyl esters are also readily hydrolyzed, but rates on arylamides are exceedingly low.. It catalyses the reaction Release of an N-terminal amino acid, preferentially leucine, but not glutamic or aspartic acids.. Presumably involved in the processing and regular turnover of intracellular proteins. Catalyzes the removal of unsubstituted N-terminal amino acids from various peptides. The sequence is that of Probable cytosol aminopeptidase from Chlamydia felis (strain Fe/C-56) (Chlamydophila felis).